Consider the following 565-residue polypeptide: Arginine--tRNA ligase (565 aa).

A 'HIGH' region motif is present at residues 126–136; it reads ANPTGPLHIGH.

Belongs to the class-I aminoacyl-tRNA synthetase family. As to quaternary structure, monomer.

The protein resides in the cytoplasm. It catalyses the reaction tRNA(Arg) + L-arginine + ATP = L-arginyl-tRNA(Arg) + AMP + diphosphate. This chain is Arginine--tRNA ligase, found in Wolbachia sp. subsp. Brugia malayi (strain TRS).